The chain runs to 470 residues: Macrophage metalloelastase (470 aa).

A signal peptide spans 1 to 16 (MKFLLILLLQATASGA). Residues 17-105 (LPLNSSTSLE…DVHHFREMPG (89 aa)) constitute a propeptide, activation peptide. N-linked (GlcNAc...) asparagine glycosylation is present at Asn20. A Cysteine switch motif is present at residues 90–97 (PRCGVPDV). A Zn(2+)-binding site is contributed by Cys92. Residues Asp124 and Asp158 each contribute to the Ca(2+) site. The Zn(2+) site is built by His168 and Asp170. Residues Asp175, Gly176, Gly178, and Ile180 each coordinate Ca(2+). His183 lines the Zn(2+) pocket. Gly190, Gly192, and Asp194 together coordinate Ca(2+). His196 serves as a coordination point for Zn(2+). Asp198, Glu199, and Glu201 together coordinate Ca(2+). His218 lines the Zn(2+) pocket. Glu219 is an active-site residue. Zn(2+) contacts are provided by His222 and His228. 4 Hemopexin repeats span residues 279–328 (PALC…WPTL), 329–375 (PSGI…GFPN), 377–425 (VKKI…FQGI), and 426–470 (GPKI…WFGC). Cysteines 282 and 470 form a disulfide. A glycan (N-linked (GlcNAc...) asparagine) is linked at Asn285. Residues Asp289, Glu333, Asp381, and Asp430 each contribute to the Ca(2+) site.

Belongs to the peptidase M10A family. The cofactor is Ca(2+). Zn(2+) serves as cofactor. In terms of tissue distribution, found in alveolar macrophages but not in peripheral blood monocytes.

The protein localises to the secreted. The protein resides in the extracellular space. Its subcellular location is the extracellular matrix. The enzyme catalyses Hydrolysis of soluble and insoluble elastin. Specific cleavages are also produced at 14-Ala-|-Leu-15 and 16-Tyr-|-Leu-17 in the B chain of insulin.. In terms of biological role, may be involved in tissue injury and remodeling. Has significant elastolytic activity. Can accept large and small amino acids at the P1' site, but has a preference for leucine. Aromatic or hydrophobic residues are preferred at the P1 site, with small hydrophobic residues (preferably alanine) occupying P3. The polypeptide is Macrophage metalloelastase (MMP12) (Homo sapiens (Human)).